Here is a 763-residue protein sequence, read N- to C-terminus: Phosphoglycerol transferase I (763 aa).

4 consecutive transmembrane segments (helical) span residues 4 to 19 (LLSF…IYAW), 26 to 48 (WWFA…LFAS), 76 to 98 (YILP…GWIL), and 105 to 127 (PHHF…ASPA).

Belongs to the OpgB family.

Its subcellular location is the cell inner membrane. It catalyses the reaction a phosphatidylglycerol + a membrane-derived-oligosaccharide D-glucose = a 1,2-diacyl-sn-glycerol + a membrane-derived-oligosaccharide 6-(glycerophospho)-D-glucose.. It participates in glycan metabolism; osmoregulated periplasmic glucan (OPG) biosynthesis. In terms of biological role, transfers a phosphoglycerol residue from phosphatidylglycerol to the membrane-bound nascent glucan backbones. This chain is Phosphoglycerol transferase I, found in Escherichia coli O157:H7.